The sequence spans 523 residues: Cytochrome P450 monooxygenase ple5B (523 aa).

The helical transmembrane segment at 16-33 (IAAAAAGSAVAVYKLLQL) threads the bilayer. 6 N-linked (GlcNAc...) asparagine glycosylation sites follow: asparagine 82, asparagine 103, asparagine 122, asparagine 295, asparagine 379, and asparagine 423. Cysteine 446 lines the heme pocket.

It belongs to the cytochrome P450 family. Heme serves as cofactor.

The protein localises to the membrane. It functions in the pathway secondary metabolite biosynthesis; terpenoid biosynthesis. In terms of biological role, cytochrome P450 monooxygenase; part of the gene cluster that mediates the biosynthesis of pleuromutilin, a tricyclic diterpene showing antibacterial properties. The geranylgeranyl diphosphate (GGPP) synthase ple4 catalyzes the first step in pleuromutilin biosynthesis. GGPP is then substrate of the premutilin synthase (PS) ple3 to yield premutilin. Premutilin synthase is a bifunctional enzyme composed of the fusion of a class II diterpene cyclase (DTC) and a class I diterpene synthase (DTS), with the corresponding domains and active sites containing characteristic aspartate-rich motifs. GGPP is first converted to mutildienyl-diphosphate (MPP) at the class II DTC site. MPP is subsequently further cyclized at the class I DTS site, followed by a 1,5-hydride shift and addition of water prior to terminating deprotonation, to yield premutilin. The cytochrome P450 monooxygenases ple5 and ple6 hydroxylate premutilin at C-11 and C-3, respectively, producing 11-hydroxypremutilin and 3-hydroxypremutilin. The combination of the actions of both ple5 and ple6 leads to the production of 3,11-dihydroxypremutilin. The short chain dehydrogenase ple7 further converts 3,11-dihydroxypremutilin into mutilin. The acetyltransferase ple2 then acetylates mutilin to produce 14-O-acetylmutilin. Finally, the cytochrome P450 monooxygenase ple1 catalyzes hydroxylation on the alpha position of the acetyl side chain of 14-O-acetylmutilin to yield pleuromutilin. The polypeptide is Cytochrome P450 monooxygenase ple5B (Rhodocybe pseudopiperita (Clitopilus pseudopiperitus)).